The sequence spans 156 residues: MRVVSVLGLDVGSKRIGVAGCDPTGLIASGLETIVRCNLGADLDAIRHWIERRRAQAVVIGLPRNMNGSLGPQAHRIQHFGQQLARVIDVPIDYVDERLSTVQAGRALQSVSATRRKALIDQQAAAIILQQWLDIRRCQHRPTQESLDERHIDTER.

It belongs to the YqgF nuclease family.

The protein resides in the cytoplasm. Could be a nuclease involved in processing of the 5'-end of pre-16S rRNA. In Gloeobacter violaceus (strain ATCC 29082 / PCC 7421), this protein is Putative pre-16S rRNA nuclease.